Reading from the N-terminus, the 345-residue chain is Dihydroorotate dehydrogenase (quinone) (345 aa).

FMN contacts are provided by residues 65 to 69 (AGLDK) and threonine 89. Lysine 69 provides a ligand contact to substrate. 114 to 118 (NRMGF) lines the substrate pocket. The FMN site is built by asparagine 142 and asparagine 175. Asparagine 175 contacts substrate. Residue serine 178 is the Nucleophile of the active site. Asparagine 180 is a substrate binding site. Positions 220 and 248 each coordinate FMN. 249–250 (NT) contacts substrate. FMN-binding positions include glycine 271, glycine 300, and 321 to 322 (YT).

This sequence belongs to the dihydroorotate dehydrogenase family. Type 2 subfamily. In terms of assembly, monomer. FMN serves as cofactor.

Its subcellular location is the cell membrane. It carries out the reaction (S)-dihydroorotate + a quinone = orotate + a quinol. It functions in the pathway pyrimidine metabolism; UMP biosynthesis via de novo pathway; orotate from (S)-dihydroorotate (quinone route): step 1/1. Its function is as follows. Catalyzes the conversion of dihydroorotate to orotate with quinone as electron acceptor. The sequence is that of Dihydroorotate dehydrogenase (quinone) from Burkholderia cenocepacia (strain ATCC BAA-245 / DSM 16553 / LMG 16656 / NCTC 13227 / J2315 / CF5610) (Burkholderia cepacia (strain J2315)).